A 612-amino-acid chain; its full sequence is Calcium-dependent protein kinase 27 (612 aa).

Glycine 2 carries N-myristoyl glycine lipidation. Residues 23-132 are disordered; that stretch reads PRHAAPSSPS…AHIKRISSAG (110 aa). Residues 28-50 are compositionally biased toward low complexity; the sequence is PSSPSQPTTTSRSIPVVLPSAPS. The segment covering 51–100 has biased composition (pro residues); sequence SKPPPPTQTAPPVPVVISEPPPPQPQPEPQPAAPSQPPPPQEQPSPPPPA. The span at 117-127 shows a compositional bias: basic residues; that stretch reads SRAKKPAHIKR. A Protein kinase domain is found at 150–408; sequence YSLGRKLGQG…AHEVLCHPWL (259 aa). Residues 156-164 and lysine 179 each bind ATP; that span reads LGQGQFGTT. Aspartate 274 acts as the Proton acceptor in catalysis. The interval 414–444 is autoinhibitory domain; the sequence is APDKPLDSAVLSRLRQFSAMNKLKKMALRVI. EF-hand domains are found at residues 451 to 486, 487 to 522, 523 to 558, and 561 to 592; these read EEIA…VGAN, MKES…LNKV, ERED…FGIE, and RLED…TTTG. Positions 464, 466, 468, 470, 475, 500, 502, 504, 506, 511, 536, 538, 540, 542, 547, 570, 572, 574, 576, and 581 each coordinate Ca(2+).

Belongs to the protein kinase superfamily. Ser/Thr protein kinase family. CDPK subfamily.

The protein resides in the membrane. It catalyses the reaction L-seryl-[protein] + ATP = O-phospho-L-seryl-[protein] + ADP + H(+). It carries out the reaction L-threonyl-[protein] + ATP = O-phospho-L-threonyl-[protein] + ADP + H(+). Activated by calcium. Autophosphorylation may play an important role in the regulation of the kinase activity. In terms of biological role, may play a role in signal transduction pathways that involve calcium as a second messenger. The polypeptide is Calcium-dependent protein kinase 27 (Oryza sativa subsp. japonica (Rice)).